Here is a 286-residue protein sequence, read N- to C-terminus: Bifunctional protein FolD (286 aa).

NADP(+)-binding positions include 160–162 (GRS), Ser-189, and Thr-230.

Belongs to the tetrahydrofolate dehydrogenase/cyclohydrolase family. In terms of assembly, homodimer.

The enzyme catalyses (6R)-5,10-methylene-5,6,7,8-tetrahydrofolate + NADP(+) = (6R)-5,10-methenyltetrahydrofolate + NADPH. It carries out the reaction (6R)-5,10-methenyltetrahydrofolate + H2O = (6R)-10-formyltetrahydrofolate + H(+). The protein operates within one-carbon metabolism; tetrahydrofolate interconversion. Functionally, catalyzes the oxidation of 5,10-methylenetetrahydrofolate to 5,10-methenyltetrahydrofolate and then the hydrolysis of 5,10-methenyltetrahydrofolate to 10-formyltetrahydrofolate. In Chlamydia pneumoniae (Chlamydophila pneumoniae), this protein is Bifunctional protein FolD.